A 241-amino-acid polypeptide reads, in one-letter code: Ribonuclease PH (241 aa).

Phosphate contacts are provided by residues Arg89 and 127–129; that span reads GTR.

It belongs to the RNase PH family. As to quaternary structure, homohexameric ring arranged as a trimer of dimers.

The catalysed reaction is tRNA(n+1) + phosphate = tRNA(n) + a ribonucleoside 5'-diphosphate. Functionally, phosphorolytic 3'-5' exoribonuclease that plays an important role in tRNA 3'-end maturation. Removes nucleotide residues following the 3'-CCA terminus of tRNAs; can also add nucleotides to the ends of RNA molecules by using nucleoside diphosphates as substrates, but this may not be physiologically important. Probably plays a role in initiation of 16S rRNA degradation (leading to ribosome degradation) during starvation. The sequence is that of Ribonuclease PH from Xanthomonas campestris pv. campestris (strain 8004).